The primary structure comprises 614 residues: Ankyrin repeat domain-containing protein 55 (614 aa).

The disordered stretch occupies residues Met-1 to Gly-20. The span at Met-7–Asp-16 shows a compositional bias: polar residues. 9 ANK repeats span residues Val-26–Glu-55, Glu-60–Met-89, Tyr-93–Lys-125, Asn-126–His-157, Glu-161–Leu-190, Asp-194–Ile-223, Ser-230–Ala-260, Asp-264–Leu-293, and Asn-297–Thr-326. Disordered regions lie at residues Gln-319–Lys-339, Lys-354–Thr-375, Thr-454–Glu-476, and Arg-564–Asn-614. The segment covering Lys-354 to Glu-373 has biased composition (basic and acidic residues). Residue Ser-475 is modified to Phosphoserine.

The sequence is that of Ankyrin repeat domain-containing protein 55 (ANKRD55) from Homo sapiens (Human).